The chain runs to 473 residues: 3-isopropylmalate dehydratase large subunit (473 aa).

Cys-351, Cys-414, and Cys-417 together coordinate [4Fe-4S] cluster.

Belongs to the aconitase/IPM isomerase family. LeuC type 1 subfamily. In terms of assembly, heterodimer of LeuC and LeuD. The cofactor is [4Fe-4S] cluster.

It catalyses the reaction (2R,3S)-3-isopropylmalate = (2S)-2-isopropylmalate. It participates in amino-acid biosynthesis; L-leucine biosynthesis; L-leucine from 3-methyl-2-oxobutanoate: step 2/4. Functionally, catalyzes the isomerization between 2-isopropylmalate and 3-isopropylmalate, via the formation of 2-isopropylmaleate. The protein is 3-isopropylmalate dehydratase large subunit of Paracidovorax citrulli (strain AAC00-1) (Acidovorax citrulli).